Here is a 509-residue protein sequence, read N- to C-terminus: Lysine--tRNA ligase (509 aa).

Mg(2+)-binding residues include Glu-417 and Glu-424.

Belongs to the class-II aminoacyl-tRNA synthetase family. In terms of assembly, homodimer. Mg(2+) serves as cofactor.

It is found in the cytoplasm. The enzyme catalyses tRNA(Lys) + L-lysine + ATP = L-lysyl-tRNA(Lys) + AMP + diphosphate. In Blochmanniella pennsylvanica (strain BPEN), this protein is Lysine--tRNA ligase.